An 860-amino-acid chain; its full sequence is MQEQYRPDLIEAEVQKYWQENKTFKAIKDTNKEKYYCLSMLPYPSGRLHMGHVRNYTIGDVVSRYQRMIGKNVLQPMGWDAFGLPAEGAAVKNNTAPAKWTYENIEYMKNQLKVLGFSYDWEREVTTCRPEYYKWEQWFFTELYKKGLVYKKTSVVNWCPNDETVLANEQVHEGCCWRCDTPVEQREIPQWFIKITDYAEQLLGGLDTLPEWPEMVKTMQRNWIGRSEGVEITFKIENSDETVAVYTTRPDTFYGVSYMAVAAGHPLAERAAQNNPDLAKFIQECKNTKVAEAELATMEKKGMATGLNAVHPITGKPVPIWVANFVLMHYGTGAVMAVPAHDQRDFEFATKYDLPINQVIAPVNGEDIDLSKAAFTEHGKLVNSAEFDGLDFDAAFNGIADKLERMGAGKRQVNYRLRDWGVSRQRYWGAPIPMLTLENGDVVPAPLQDLPIVLPEDVVMDGVKSPIKADPDWAKTTYNGRPALKETDTFDTFMESSWYYARYTCPQYHEGMLDSEEANYWLPVDQYIGGIEHATMHLLYFRFFHKLLRDAGLVSTDEPTKKLLCQGMVLADAFYYTSPTNERIWVSPTKVTLERDEKGRIVKALDDEGRELVHAGMTKMSKSKNNGIDPQEMVEKYGADTVRLFMMFASPAEMTLEWQESGVEGAKRFLGRLWNLVFEYNKNPAKTALNPTALSGVQKALRRGVHKTIAKVSDDIGRRQTFNTAIAAIMELMNKLTRASLAGEQDRAIMGEALSAVVRMLYPITPHVCFQLWKELGNEDVIDFAPWVQADEAAMVEEEKLVVVQVNGKVRGKITVPADMAEDDIKQAALADENVQKFLSGLNIVKTIYVPGKLFSFVAK.

A 'HIGH' region motif is present at residues P42–H52. The short motif at K619 to S623 is the 'KMSKS' region element. K622 contributes to the ATP binding site.

The protein belongs to the class-I aminoacyl-tRNA synthetase family.

It localises to the cytoplasm. It catalyses the reaction tRNA(Leu) + L-leucine + ATP = L-leucyl-tRNA(Leu) + AMP + diphosphate. In Actinobacillus succinogenes (strain ATCC 55618 / DSM 22257 / CCUG 43843 / 130Z), this protein is Leucine--tRNA ligase.